A 352-amino-acid chain; its full sequence is Histidinol-phosphate aminotransferase (352 aa).

Position 211 is an N6-(pyridoxal phosphate)lysine (K211).

It belongs to the class-II pyridoxal-phosphate-dependent aminotransferase family. Histidinol-phosphate aminotransferase subfamily. Homodimer. Pyridoxal 5'-phosphate serves as cofactor.

The catalysed reaction is L-histidinol phosphate + 2-oxoglutarate = 3-(imidazol-4-yl)-2-oxopropyl phosphate + L-glutamate. The protein operates within amino-acid biosynthesis; L-histidine biosynthesis; L-histidine from 5-phospho-alpha-D-ribose 1-diphosphate: step 7/9. This is Histidinol-phosphate aminotransferase from Haemophilus influenzae (strain PittEE).